Here is a 72-residue protein sequence, read N- to C-terminus: Neuropeptide SIFamide (72 aa).

Positions 1–26 (MALRFTLTLLLVTILVAAILLGSSEA) are cleaved as a signal peptide. Asn-34 is a glycosylation site (N-linked (GlcNAc...) asparagine). Phe-38 carries the phenylalanine amide modification. Positions 42 to 72 (NSLDYDSAKMSAVCEVAMEACPMWFPQNDSK) are excised as a propeptide.

It belongs to the FARP (FMRFamide related peptide) family. As to expression, strongly expressed in two pairs of neurons in the pars intercerebralis (at protein level).

It localises to the secreted. In terms of biological role, ligand for the neuropeptide SIFamide receptor. Modulates sexual behavior by negatively regulating female receptivity to male courtship and by playing a role in male sex discrimination. Also involved in promoting sleep. The sequence is that of Neuropeptide SIFamide from Drosophila melanogaster (Fruit fly).